Consider the following 203-residue polypeptide: Small ribosomal subunit protein uS4 (203 aa).

The 81-residue stretch at 93-173 (RRFDNVVFRA…IPSWIQVDKA (81 aa)) folds into the S4 RNA-binding domain.

This sequence belongs to the universal ribosomal protein uS4 family. Part of the 30S ribosomal subunit. Contacts protein S5. The interaction surface between S4 and S5 is involved in control of translational fidelity.

Its function is as follows. One of the primary rRNA binding proteins, it binds directly to 16S rRNA where it nucleates assembly of the body of the 30S subunit. Functionally, with S5 and S12 plays an important role in translational accuracy. The chain is Small ribosomal subunit protein uS4 from Pelodictyon phaeoclathratiforme (strain DSM 5477 / BU-1).